A 120-amino-acid chain; its full sequence is Large ribosomal subunit protein uL18 (120 aa).

This sequence belongs to the universal ribosomal protein uL18 family. Part of the 50S ribosomal subunit; part of the 5S rRNA/L5/L18/L25 subcomplex. Contacts the 5S and 23S rRNAs.

In terms of biological role, this is one of the proteins that bind and probably mediate the attachment of the 5S RNA into the large ribosomal subunit, where it forms part of the central protuberance. The polypeptide is Large ribosomal subunit protein uL18 (Methylorubrum extorquens (strain CM4 / NCIMB 13688) (Methylobacterium extorquens)).